We begin with the raw amino-acid sequence, 461 residues long: Kynureninase (461 aa).

Pyridoxal 5'-phosphate contacts are provided by residues L114, T115, 142 to 145, D228, H231, and Y253; that span reads FPSD. K254 carries the N6-(pyridoxal phosphate)lysine modification. Pyridoxal 5'-phosphate-binding residues include W288 and N316.

This sequence belongs to the kynureninase family. As to quaternary structure, homodimer. Requires pyridoxal 5'-phosphate as cofactor.

The protein localises to the cytoplasm. The catalysed reaction is L-kynurenine + H2O = anthranilate + L-alanine + H(+). It carries out the reaction 3-hydroxy-L-kynurenine + H2O = 3-hydroxyanthranilate + L-alanine + H(+). Its pathway is amino-acid degradation; L-kynurenine degradation; L-alanine and anthranilate from L-kynurenine: step 1/1. The protein operates within cofactor biosynthesis; NAD(+) biosynthesis; quinolinate from L-kynurenine: step 2/3. In terms of biological role, catalyzes the cleavage of L-kynurenine (L-Kyn) and L-3-hydroxykynurenine (L-3OHKyn) into anthranilic acid (AA) and 3-hydroxyanthranilic acid (3-OHAA), respectively. In Lodderomyces elongisporus (strain ATCC 11503 / CBS 2605 / JCM 1781 / NBRC 1676 / NRRL YB-4239) (Yeast), this protein is Kynureninase.